Here is a 420-residue protein sequence, read N- to C-terminus: RING finger protein 39 (420 aa).

The segment at 88–135 adopts an RING-type zinc-finger fold; sequence CPLCGGSFEDPVLLACEHSFCRACLARRWGTPPATDTEASPTACPCCG. Disordered stretches follow at residues 166 to 186 and 246 to 265; these read PGAR…CLDP and DRRS…DGPK. The B30.2/SPRY domain maps to 210–420; sequence DDLPEDYPVV…APLRIVPAES (211 aa).

The protein resides in the cytoplasm. The enzyme catalyses S-ubiquitinyl-[E2 ubiquitin-conjugating enzyme]-L-cysteine + [acceptor protein]-L-lysine = [E2 ubiquitin-conjugating enzyme]-L-cysteine + N(6)-ubiquitinyl-[acceptor protein]-L-lysine.. The protein operates within protein modification; protein ubiquitination. Functionally, plays an inhibitory role in anti-RNA viral innate immunity by targeting the adapter DDX3X and promoting its 'Lys-48'-linked polyubiquitination. Alternatively, enhances the cGAS-STING pathway activation by promoting 'Lys-63'-linked ubiquitination of STING1, facilitating the STING1-TBK1 complex formation and STING1 activation. This Macaca mulatta (Rhesus macaque) protein is RING finger protein 39 (RNF39).